Here is a 381-residue protein sequence, read N- to C-terminus: Lipid-A-disaccharide synthase (381 aa).

It belongs to the LpxB family.

The enzyme catalyses a lipid X + a UDP-2-N,3-O-bis[(3R)-3-hydroxyacyl]-alpha-D-glucosamine = a lipid A disaccharide + UDP + H(+). Its pathway is bacterial outer membrane biogenesis; LPS lipid A biosynthesis. Condensation of UDP-2,3-diacylglucosamine and 2,3-diacylglucosamine-1-phosphate to form lipid A disaccharide, a precursor of lipid A, a phosphorylated glycolipid that anchors the lipopolysaccharide to the outer membrane of the cell. This Psychromonas ingrahamii (strain DSM 17664 / CCUG 51855 / 37) protein is Lipid-A-disaccharide synthase.